The sequence spans 519 residues: Golgi-associated kinase 1B (519 aa).

Topologically, residues 1 to 37 (MTCPDKPGQLINWFICSLCVPRVRKLWSSRRPRTRRN) are cytoplasmic. A helical; Signal-anchor for type II membrane protein membrane pass occupies residues 38–55 (LLLGTACAIYLGFLVSQV). At 56-519 (GRASLQHGQA…HGVKVLPMNE (464 aa)) the chain is on the extracellular side. Residues 62 to 103 (HGQAAEKGPHRSRDTAEPSFPEIPLDGTLAPPESQGNGSTLQ) are disordered. Positions 68–77 (KGPHRSRDTA) are enriched in basic and acidic residues. Asn289 carries an N-linked (GlcNAc...) asparagine glycan.

The protein belongs to the GASK family.

The protein localises to the golgi apparatus membrane. The chain is Golgi-associated kinase 1B from Homo sapiens (Human).